The following is a 142-amino-acid chain: Large ribosomal subunit protein uL11 (142 aa).

The protein belongs to the universal ribosomal protein uL11 family. As to quaternary structure, part of the ribosomal stalk of the 50S ribosomal subunit. Interacts with L10 and the large rRNA to form the base of the stalk. L10 forms an elongated spine to which L12 dimers bind in a sequential fashion forming a multimeric L10(L12)X complex. Post-translationally, one or more lysine residues are methylated.

In terms of biological role, forms part of the ribosomal stalk which helps the ribosome interact with GTP-bound translation factors. In Shewanella sediminis (strain HAW-EB3), this protein is Large ribosomal subunit protein uL11.